We begin with the raw amino-acid sequence, 147 residues long: Nitric oxide reductase subunit C (147 aa).

Residues V13–T29 form a helical; Signal-anchor membrane-spanning segment. Positions 59, 62, and 63 each coordinate heme c.

Heterodimer of cytochromes b (large subunit) and c (small subunit).

The protein localises to the cell membrane. Its function is as follows. Component of the anaerobic respiratory chain that transforms nitrate to dinitrogen (denitrification). This chain is Nitric oxide reductase subunit C (norC), found in Cereibacter sphaeroides (strain ATCC 17025 / ATH 2.4.3) (Rhodobacter sphaeroides).